A 357-amino-acid chain; its full sequence is tRNA N6-adenosine threonylcarbamoyltransferase (357 aa).

Fe cation contacts are provided by histidine 116 and histidine 120. Residues 139 to 143 (LVSGG), aspartate 172, glycine 185, and asparagine 284 contribute to the substrate site. Residue aspartate 312 coordinates Fe cation.

It belongs to the KAE1 / TsaD family. Fe(2+) serves as cofactor.

The protein resides in the cytoplasm. The enzyme catalyses L-threonylcarbamoyladenylate + adenosine(37) in tRNA = N(6)-L-threonylcarbamoyladenosine(37) in tRNA + AMP + H(+). Required for the formation of a threonylcarbamoyl group on adenosine at position 37 (t(6)A37) in tRNAs that read codons beginning with adenine. Is involved in the transfer of the threonylcarbamoyl moiety of threonylcarbamoyl-AMP (TC-AMP) to the N6 group of A37, together with TsaE and TsaB. TsaD likely plays a direct catalytic role in this reaction. In Synechococcus sp. (strain CC9902), this protein is tRNA N6-adenosine threonylcarbamoyltransferase.